Reading from the N-terminus, the 301-residue chain is Olfactory receptor 10AG1 (301 aa).

Over 1-16 (MEFVLLGFSDIPNLHW) the chain is Extracellular. A helical membrane pass occupies residues 17-37 (MLFSIFLLMYLMILMCNGIII). Residues 38–45 (LLIKIHPA) lie on the Cytoplasmic side of the membrane. A helical transmembrane segment spans residues 46–66 (LQTPMYFFLSNFSLLEICYVT). Topologically, residues 67-90 (IIIPRMLMDIWTQKGNISLFACAT) are extracellular. N-linked (GlcNAc...) asparagine glycosylation is present at Asn82. The cysteines at positions 88 and 180 are disulfide-linked. Residues 91–111 (QMCFFLMLGGTECLLLTVMAY) traverse the membrane as a helical segment. The Cytoplasmic portion of the chain corresponds to 112–130 (DRYVAICKPLQYPLVMNHK). The chain crosses the membrane as a helical span at residues 131–151 (VCIQLIIASWTITIPVVIGET). The Extracellular portion of the chain corresponds to 152–188 (CQIFLLPFCGTNTINHFFCDIPPILKLACGNIFVNEI). Residues 189–208 (TVHVVAVVFITVPFLLIVVS) traverse the membrane as a helical segment. Topologically, residues 209–228 (YGKIISNILKLSSARGKAKA) are cytoplasmic. A helical membrane pass occupies residues 229 to 249 (FSTCSSHLIVVILFFGAGTIT). The Extracellular segment spans residues 250 to 262 (YLQPKPHQFQRMG). A helical membrane pass occupies residues 263–283 (KLISLFYTILIPTLNPIIYTL). The Cytoplasmic portion of the chain corresponds to 284-301 (RNKDIMVALRKLLAKLLT).

Belongs to the G-protein coupled receptor 1 family.

The protein resides in the cell membrane. Odorant receptor. The sequence is that of Olfactory receptor 10AG1 (OR10AG1) from Homo sapiens (Human).